The sequence spans 382 residues: Anhydro-N-acetylmuramic acid kinase (382 aa).

22 to 29 (GTSMDGVD) is an ATP binding site.

The protein belongs to the anhydro-N-acetylmuramic acid kinase family.

The enzyme catalyses 1,6-anhydro-N-acetyl-beta-muramate + ATP + H2O = N-acetyl-D-muramate 6-phosphate + ADP + H(+). It functions in the pathway amino-sugar metabolism; 1,6-anhydro-N-acetylmuramate degradation. The protein operates within cell wall biogenesis; peptidoglycan recycling. In terms of biological role, catalyzes the specific phosphorylation of 1,6-anhydro-N-acetylmuramic acid (anhMurNAc) with the simultaneous cleavage of the 1,6-anhydro ring, generating MurNAc-6-P. Is required for the utilization of anhMurNAc either imported from the medium or derived from its own cell wall murein, and thus plays a role in cell wall recycling. The polypeptide is Anhydro-N-acetylmuramic acid kinase (Burkholderia ambifaria (strain ATCC BAA-244 / DSM 16087 / CCUG 44356 / LMG 19182 / AMMD) (Burkholderia cepacia (strain AMMD))).